A 199-amino-acid polypeptide reads, in one-letter code: Recombination protein RecR (199 aa).

The C4-type zinc-finger motif lies at Cys-56 to Cys-71. The Toprim domain maps to Thr-79–Pro-174.

Belongs to the RecR family.

May play a role in DNA repair. It seems to be involved in an RecBC-independent recombinational process of DNA repair. It may act with RecF and RecO. The chain is Recombination protein RecR from Acidothermus cellulolyticus (strain ATCC 43068 / DSM 8971 / 11B).